The chain runs to 260 residues: Thiazole synthase (260 aa).

Lys102 acts as the Schiff-base intermediate with DXP in catalysis. Residues Gly163, 189-190 (AG), and 211-212 (NT) contribute to the 1-deoxy-D-xylulose 5-phosphate site.

It belongs to the ThiG family. Homotetramer. Forms heterodimers with either ThiH or ThiS.

It localises to the cytoplasm. The catalysed reaction is [ThiS sulfur-carrier protein]-C-terminal-Gly-aminoethanethioate + 2-iminoacetate + 1-deoxy-D-xylulose 5-phosphate = [ThiS sulfur-carrier protein]-C-terminal Gly-Gly + 2-[(2R,5Z)-2-carboxy-4-methylthiazol-5(2H)-ylidene]ethyl phosphate + 2 H2O + H(+). It functions in the pathway cofactor biosynthesis; thiamine diphosphate biosynthesis. Its function is as follows. Catalyzes the rearrangement of 1-deoxy-D-xylulose 5-phosphate (DXP) to produce the thiazole phosphate moiety of thiamine. Sulfur is provided by the thiocarboxylate moiety of the carrier protein ThiS. In vitro, sulfur can be provided by H(2)S. The sequence is that of Thiazole synthase from Geobacter metallireducens (strain ATCC 53774 / DSM 7210 / GS-15).